A 764-amino-acid polypeptide reads, in one-letter code: 1,4-alpha-glucan branching enzyme GlgB (764 aa).

The active-site Nucleophile is the Asp434. Glu487 serves as the catalytic Proton donor.

Belongs to the glycosyl hydrolase 13 family. GlgB subfamily. In terms of assembly, monomer.

The enzyme catalyses Transfers a segment of a (1-&gt;4)-alpha-D-glucan chain to a primary hydroxy group in a similar glucan chain.. It participates in glycan biosynthesis; glycogen biosynthesis. Catalyzes the formation of the alpha-1,6-glucosidic linkages in glycogen by scission of a 1,4-alpha-linked oligosaccharide from growing alpha-1,4-glucan chains and the subsequent attachment of the oligosaccharide to the alpha-1,6 position. The chain is 1,4-alpha-glucan branching enzyme GlgB from Trichormus variabilis (strain ATCC 29413 / PCC 7937) (Anabaena variabilis).